Reading from the N-terminus, the 205-residue chain is Rho GDP-dissociation inhibitor (205 aa).

The segment covering methionine 1–glutamine 11 has biased composition (polar residues). The tract at residues methionine 1–glutamate 31 is disordered. At serine 63 the chain carries Phosphoserine.

It belongs to the Rho GDI family.

The protein localises to the cytoplasm. It localises to the nucleus. Functionally, regulates the GDP/GTP exchange reaction of the Rho proteins by inhibiting the dissociation of GDP from them, and the subsequent binding of GTP to them. The polypeptide is Rho GDP-dissociation inhibitor (Schizosaccharomyces pombe (strain 972 / ATCC 24843) (Fission yeast)).